The sequence spans 281 residues: tRNA pseudouridine synthase A (281 aa).

Asp55 functions as the Nucleophile in the catalytic mechanism. Tyr110 provides a ligand contact to substrate.

It belongs to the tRNA pseudouridine synthase TruA family.

It carries out the reaction uridine(38/39/40) in tRNA = pseudouridine(38/39/40) in tRNA. Functionally, formation of pseudouridine at positions 38, 39 and 40 in the anticodon stem and loop of transfer RNAs. This Methanocorpusculum labreanum (strain ATCC 43576 / DSM 4855 / Z) protein is tRNA pseudouridine synthase A.